A 268-amino-acid chain; its full sequence is MSDDRDIQLEAEKQGVFLTTMQRFYNWGRRSSVWPLSFGLACCAIEMMATGLARFDLARFGAEMFRASPRQADLMIVAGTVTKKMAPQVVRLYNQMPEPRYVISMGACATSGGPFRDGYNVLRGIDLLIPVDVYIPGCPPRPEALLHALMTLQKQIDAQRLNRVRWYGKREAKEYPVPAFGKHGLEIDGKLVDPVGGLPLISPYTSPTHGEMRSGEIEHPELVRHFPIMDETVELESPNKAKGVAPEIRHNDLKRPAVEVDHARDEQR.

Residues C42, C43, C108, and C138 each contribute to the [4Fe-4S] cluster site. Residues 237–268 (SPNKAKGVAPEIRHNDLKRPAVEVDHARDEQR) are disordered. Over residues 247-268 (EIRHNDLKRPAVEVDHARDEQR) the composition is skewed to basic and acidic residues.

The protein belongs to the complex I 20 kDa subunit family. As to quaternary structure, NDH-1 is composed of 14 different subunits. Subunits NuoB, C, D, E, F, and G constitute the peripheral sector of the complex. Requires [4Fe-4S] cluster as cofactor.

Its subcellular location is the cell membrane. It catalyses the reaction a quinone + NADH + 5 H(+)(in) = a quinol + NAD(+) + 4 H(+)(out). Its function is as follows. NDH-1 shuttles electrons from NADH, via FMN and iron-sulfur (Fe-S) centers, to quinones in the respiratory chain. The immediate electron acceptor for the enzyme in this species is believed to be ubiquinone. Couples the redox reaction to proton translocation (for every two electrons transferred, four hydrogen ions are translocated across the cytoplasmic membrane), and thus conserves the redox energy in a proton gradient. This chain is NADH-quinone oxidoreductase subunit B 2, found in Roseiflexus castenholzii (strain DSM 13941 / HLO8).